Here is a 284-residue protein sequence, read N- to C-terminus: NAD kinase (284 aa).

The active-site Proton acceptor is D70. NAD(+)-binding positions include 70–71, 139–140, K167, D169, L177, 180–185, and Q236; these read DG, NE, and TAYNLS.

It belongs to the NAD kinase family. The cofactor is a divalent metal cation.

It is found in the cytoplasm. The catalysed reaction is NAD(+) + ATP = ADP + NADP(+) + H(+). Involved in the regulation of the intracellular balance of NAD and NADP, and is a key enzyme in the biosynthesis of NADP. Catalyzes specifically the phosphorylation on 2'-hydroxyl of the adenosine moiety of NAD to yield NADP. This is NAD kinase from Helicobacter pylori (strain Shi470).